A 271-amino-acid polypeptide reads, in one-letter code: Formamidopyrimidine-DNA glycosylase (271 aa).

P2 functions as the Schiff-base intermediate with DNA in the catalytic mechanism. The active-site Proton donor is the E3. K57 (proton donor; for beta-elimination activity) is an active-site residue. The DNA site is built by H90, R109, and K151. Residues 236–270 form an FPG-type zinc finger; sequence HVYSRGGETCTSCGNLLSEIRLGQRTTVFCGICQT. Catalysis depends on R260, which acts as the Proton donor; for delta-elimination activity.

Belongs to the FPG family. Monomer. The cofactor is Zn(2+).

It catalyses the reaction Hydrolysis of DNA containing ring-opened 7-methylguanine residues, releasing 2,6-diamino-4-hydroxy-5-(N-methyl)formamidopyrimidine.. The enzyme catalyses 2'-deoxyribonucleotide-(2'-deoxyribose 5'-phosphate)-2'-deoxyribonucleotide-DNA = a 3'-end 2'-deoxyribonucleotide-(2,3-dehydro-2,3-deoxyribose 5'-phosphate)-DNA + a 5'-end 5'-phospho-2'-deoxyribonucleoside-DNA + H(+). In terms of biological role, involved in base excision repair of DNA damaged by oxidation or by mutagenic agents. Acts as a DNA glycosylase that recognizes and removes damaged bases. Has a preference for oxidized purines, such as 7,8-dihydro-8-oxoguanine (8-oxoG). Has AP (apurinic/apyrimidinic) lyase activity and introduces nicks in the DNA strand. Cleaves the DNA backbone by beta-delta elimination to generate a single-strand break at the site of the removed base with both 3'- and 5'-phosphates. The sequence is that of Formamidopyrimidine-DNA glycosylase from Shewanella baltica (strain OS195).